A 413-amino-acid chain; its full sequence is CinA-like protein (413 aa).

It belongs to the CinA family.

The sequence is that of CinA-like protein from Geobacter sulfurreducens (strain ATCC 51573 / DSM 12127 / PCA).